The following is a 267-amino-acid chain: Expansin-B10 (267 aa).

The N-terminal stretch at 1–22 (MASSCLLLACVVAAAMVSAVSC) is a signal peptide. A glycan (N-linked (GlcNAc...) asparagine) is linked at N32. The 107-residue stretch at 61-167 (GGACGYKDID…RRVRCKYPGE (107 aa)) folds into the Expansin-like EG45 domain. Intrachain disulfides connect C64/C92, C95/C162, and C100/C106. The Expansin-like CBD domain maps to 181-262 (NYFAVLVKYV…NWKANALYKS (82 aa)). A glycan (N-linked (GlcNAc...) asparagine) is linked at N213.

Belongs to the expansin family. Expansin B subfamily.

It localises to the secreted. The protein localises to the cell wall. Its subcellular location is the membrane. In terms of biological role, may cause loosening and extension of plant cell walls by disrupting non-covalent bonding between cellulose microfibrils and matrix glucans. No enzymatic activity has been found. May be required for rapid internodal elongation in deepwater rice during submergence. In Oryza sativa subsp. japonica (Rice), this protein is Expansin-B10 (EXPB10).